The chain runs to 57 residues: Large ribosomal subunit protein uL30 (57 aa).

This sequence belongs to the universal ribosomal protein uL30 family. Part of the 50S ribosomal subunit.

This is Large ribosomal subunit protein uL30 from Acholeplasma laidlawii (strain PG-8A).